A 96-amino-acid polypeptide reads, in one-letter code: Dynein light chain roadblock-type 2 (96 aa).

N-acetylalanine is present on Ala-2.

This sequence belongs to the GAMAD family. As to quaternary structure, homodimer. The cytoplasmic dynein 1 complex consists of two catalytic heavy chains (HCs) and a number of non-catalytic subunits presented by intermediate chains (ICs), light intermediate chains (LICs) and light chains (LCs); the composition seems to vary in respect to the IC, LIC and LC composition. The heavy chain homodimer serves as a scaffold for the probable homodimeric assembly of the respective non-catalytic subunits. The ICs and LICs bind directly to the HC dimer and the LCs assemble on the IC dimer. Interacts with DYNC1I1 and DYNC1I2. Self-associates. Interacts with DYNLRB1.

It is found in the cytoplasm. It localises to the cytoskeleton. Acts as one of several non-catalytic accessory components of the cytoplasmic dynein 1 complex that are thought to be involved in linking dynein to cargos and to adapter proteins that regulate dynein function. Cytoplasmic dynein 1 acts as a motor for the intracellular retrograde motility of vesicles and organelles along microtubules. This chain is Dynein light chain roadblock-type 2 (DYNLRB2), found in Bos taurus (Bovine).